We begin with the raw amino-acid sequence, 263 residues long: Phosphoinositide-3-kinase-interacting protein 1 (263 aa).

The signal sequence occupies residues 1-21 (MLLAWVQAFLVSNMLLAEAYG). At 22 to 168 (SGGCFWDNGH…NSKEKKDLGT (147 aa)) the chain is on the extracellular side. In terms of domain architecture, Kringle spans 24-101 (GCFWDNGHLY…EKRPCEDLRC (78 aa)). 3 disulfides stabilise this stretch: Cys25/Cys101, Cys46/Cys82, and Cys70/Cys96. The O-linked (GalNAc...) serine glycan is linked to Ser39. A glycan (N-linked (GlcNAc...) (complex) asparagine) is linked at Asn66. The helical transmembrane segment at 169–189 (LGYVLGITMMVIIIAIGAGII) threads the bilayer. The Cytoplasmic segment spans residues 190-263 (LGYSYKRGKD…LMGQAGTPGA (74 aa)). Polar residues predominate over residues 242–251 (QTPVDPQEGT). The disordered stretch occupies residues 242-263 (QTPVDPQEGTTPLMGQAGTPGA).

Post-translationally, N- and O-glycosylated. O-glycosylated with core 1 or possibly core 8 glycans. N-glycan heterogeneity at Asn-66: dHex1Hex5HexNAc4 (major) and dHex1Hex6HexNAc5 (minor).

It is found in the cell membrane. In terms of biological role, negative regulator of hepatic phosphatidylinositol 3-kinase (PI3K) activity. The sequence is that of Phosphoinositide-3-kinase-interacting protein 1 (PIK3IP1) from Homo sapiens (Human).